The chain runs to 106 residues: ATP-dependent Clp protease adapter protein ClpS (106 aa).

It belongs to the ClpS family. As to quaternary structure, binds to the N-terminal domain of the chaperone ClpA.

Functionally, involved in the modulation of the specificity of the ClpAP-mediated ATP-dependent protein degradation. The sequence is that of ATP-dependent Clp protease adapter protein ClpS from Vibrio atlanticus (strain LGP32) (Vibrio splendidus (strain Mel32)).